A 1407-amino-acid polypeptide reads, in one-letter code: Metabotropic glutamate receptor-like protein P (1407 aa).

Topologically, residues 1 to 696 (MKFKKKNIYW…KTIKVTSFVK (696 aa)) are extracellular. N-linked (GlcNAc...) asparagine glycosylation is found at Asn43 and Asn58. PbH1 repeat units lie at residues 93-118 (ISDI…FDGG) and 129-150 (FVNV…FLYN). N-linked (GlcNAc...) asparagine glycans are attached at residues Asn162, Asn179, Asn182, Asn230, Asn241, Asn270, Asn368, Asn391, Asn464, Asn512, Asn539, Asn544, Asn554, Asn571, Asn627, and Asn646. Residues 254–279 (ISNVIFESCEFIGNRANSTGGLSFLT) form a PbH1 3 repeat. A PbH1 4 repeat occupies 452 to 476 (GYSVYIENCEVKNNTGLFKGCFIDT). A helical transmembrane segment spans residues 697-717 (FLVGTLAAILLIILIISGFIS). The Cytoplasmic portion of the chain corresponds to 718 to 731 (LKYRKKRVIRYSNP). A helical transmembrane segment spans residues 732 to 752 (LFLCIILVGCIIFLITIPVLF). The Extracellular segment spans residues 753 to 758 (GSTSAT). Residues 759–779 (CKIRFPIIVIGSCLVTSSVFI) form a helical membrane-spanning segment. The Cytoplasmic segment spans residues 780–806 (KQFRIWRLIKDIQLLRETNVENKYLLK). The helical transmembrane segment at 807-827 (FISILMVIPIIIVICSFFIFP) threads the bilayer. Over 828 to 853 (THEKYTFNQRDITITHYCSDGSYLAY) the chain is Extracellular. Residues 854 to 874 (VIIFLVYQMAILLFGCYLVIV) traverse the membrane as a helical segment. At 875–890 (CRKFRSIPGTFNEATY) the chain is on the cytoplasmic side. The helical transmembrane segment at 891–911 (IGILIYNYTVVLIVAIPLAYV) threads the bilayer. Residues 912–919 (FNKNPLAN) lie on the Extracellular side of the membrane. Residues 920-940 (FLIFSISIIVFVLSTIILLFI) form a helical membrane-spanning segment. The Cytoplasmic segment spans residues 941–1407 (PKFHFLLRKK…LSPINLSKRK (467 aa)). Positions 991 to 1004 (QQRQGNLYNNNSLG) are enriched in polar residues. 4 disordered regions span residues 991-1072 (QQRQ…DPNF), 1084-1248 (GKRK…SSIG), 1267-1351 (KKVK…NFNE), and 1369-1407 (FHQK…SKRK). Low complexity predominate over residues 1005–1029 (RSISSNTRKRSNNNINNNNNNNSFN). Positions 1030–1040 (MTGFSDSSSTI) are enriched in polar residues. Low complexity predominate over residues 1041-1071 (SNPNLTSFTSSPSSLNSSSDSDSTPDFNDPN). Positions 1084–1093 (GKRKSIEKNK) are enriched in basic and acidic residues. 3 stretches are compositionally biased toward low complexity: residues 1099 to 1147 (PNSP…NTPI), 1154 to 1246 (SSKT…SDSS), and 1276 to 1339 (SDST…NNNN). Residues 1315-1344 (NNNNNNNNNNNNNINNNNNNANNNNSDTDD) adopt a coiled-coil conformation.

The protein belongs to the G-protein coupled receptor 3 family. GABA-B receptor subfamily.

It localises to the membrane. In Dictyostelium discoideum (Social amoeba), this protein is Metabotropic glutamate receptor-like protein P (grlP).